The primary structure comprises 417 residues: Serine hydroxymethyltransferase (417 aa).

(6S)-5,6,7,8-tetrahydrofolate-binding positions include leucine 121 and 125-127 (GHL). Position 229 is an N6-(pyridoxal phosphate)lysine (lysine 229). Residue 355-357 (SPF) coordinates (6S)-5,6,7,8-tetrahydrofolate.

This sequence belongs to the SHMT family. As to quaternary structure, homodimer. Requires pyridoxal 5'-phosphate as cofactor.

Its subcellular location is the cytoplasm. The catalysed reaction is (6R)-5,10-methylene-5,6,7,8-tetrahydrofolate + glycine + H2O = (6S)-5,6,7,8-tetrahydrofolate + L-serine. Its pathway is one-carbon metabolism; tetrahydrofolate interconversion. It participates in amino-acid biosynthesis; glycine biosynthesis; glycine from L-serine: step 1/1. In terms of biological role, catalyzes the reversible interconversion of serine and glycine with tetrahydrofolate (THF) serving as the one-carbon carrier. This reaction serves as the major source of one-carbon groups required for the biosynthesis of purines, thymidylate, methionine, and other important biomolecules. Also exhibits THF-independent aldolase activity toward beta-hydroxyamino acids, producing glycine and aldehydes, via a retro-aldol mechanism. The chain is Serine hydroxymethyltransferase from Shewanella putrefaciens (strain CN-32 / ATCC BAA-453).